The sequence spans 507 residues: ATP synthase subunit alpha, chloroplastic (507 aa).

G170–T177 contacts ATP.

The protein belongs to the ATPase alpha/beta chains family. In terms of assembly, F-type ATPases have 2 components, CF(1) - the catalytic core - and CF(0) - the membrane proton channel. CF(1) has five subunits: alpha(3), beta(3), gamma(1), delta(1), epsilon(1). CF(0) has four main subunits: a, b, b' and c.

Its subcellular location is the plastid. It is found in the chloroplast thylakoid membrane. It carries out the reaction ATP + H2O + 4 H(+)(in) = ADP + phosphate + 5 H(+)(out). In terms of biological role, produces ATP from ADP in the presence of a proton gradient across the membrane. The alpha chain is a regulatory subunit. The protein is ATP synthase subunit alpha, chloroplastic of Solanum bulbocastanum (Wild potato).